A 364-amino-acid polypeptide reads, in one-letter code: Zinc transporter 3 (364 aa).

The signal sequence occupies residues 1–23 (MGAKKHTLQVLPWLLLFAQHTAA). At 24 to 44 (SACDCANTTDGADRQGAMKLK) the chain is on the extracellular side. Asn30 carries N-linked (GlcNAc...) asparagine glycosylation. Residues 45–65 (LIAIASILAAGAAGVLVPVIG) form a helical membrane-spanning segment. Residues 66–76 (RSMAALRPDGD) are Cytoplasmic-facing. Residues 77-97 (IFFAVKAFAAGVILATGMVHI) traverse the membrane as a helical segment. The Extracellular segment spans residues 98 to 119 (LPAAFDALTSPCLKRGGGDRNP). Residues 120–140 (FPFAGLVSMSAAVSTMVVDSL) form a helical membrane-spanning segment. The Cytoplasmic portion of the chain corresponds to 141–213 (AAGYYHRSQF…ESIRHKVVSQ (73 aa)). A helical transmembrane segment spans residues 214–234 (VLELGILVHSVIIGVSLGASV). Residues 235-241 (RPSTIRP) lie on the Extracellular side of the membrane. A helical membrane pass occupies residues 242–262 (LVGALSFHQFFEGVGLGGCIV). Residues 263–271 (QANFKVRAT) are Cytoplasmic-facing. The helical transmembrane segment at 272–292 (VIMAIFFSLTAPVGIVLGIAI) threads the bilayer. Residues 293–303 (SSSYNVHSSTA) lie on the Extracellular side of the membrane. A helical membrane pass occupies residues 304–324 (FVVEGVFNSASAGILIYMSLV). Residues 325 to 343 (DLLATDFNNPKLQINTKLQ) lie on the Cytoplasmic side of the membrane. The chain crosses the membrane as a helical span at residues 344–364 (LMAYLALFLGAGLMSMLAIWA).

It belongs to the ZIP transporter (TC 2.A.5) family. In terms of tissue distribution, expressed in vascular bundles of stems.

The protein localises to the cell membrane. Functionally, zinc transporter that may mediate zinc uptake from the rhizosphere. Seems specific to zinc ions and may not transport other divalent cations. This chain is Zinc transporter 3 (ZIP3), found in Oryza sativa subsp. japonica (Rice).